The sequence spans 1066 residues: Exportin-T (1066 aa).

This sequence belongs to the exportin family.

The protein localises to the nucleus. Its subcellular location is the cytoplasm. Functionally, tRNA nucleus export receptor which facilitates tRNA translocation across the nuclear pore complex. Involved in pre-tRNA splicing, probably by affecting the interaction of pre-tRNA with splicing endonuclease. The sequence is that of Exportin-T (LOS1) from Laccaria bicolor (strain S238N-H82 / ATCC MYA-4686) (Bicoloured deceiver).